A 411-amino-acid polypeptide reads, in one-letter code: Arginine deiminase (411 aa).

C401 (amidino-cysteine intermediate) is an active-site residue.

It belongs to the arginine deiminase family.

It localises to the cytoplasm. The enzyme catalyses L-arginine + H2O = L-citrulline + NH4(+). Its pathway is amino-acid degradation; L-arginine degradation via ADI pathway; carbamoyl phosphate from L-arginine: step 1/2. The sequence is that of Arginine deiminase from Streptococcus pyogenes serotype M49 (strain NZ131).